The primary structure comprises 60 residues: Single-pass membrane and coiled-coil domain-containing protein 4 homolog (60 aa).

Positions 1–21 (MRKLRGGQTKETRKQKQERRE) are disordered. Positions 8-21 (QTKETRKQKQERRE) are enriched in basic and acidic residues. The stretch at 10–33 (KETRKQKQERREENLKIQQQLKTI) forms a coiled coil. The chain crosses the membrane as a helical span at residues 32 to 52 (TIVLPICGVFLMCIVVYVFLK).

It belongs to the SMCO4 family.

The protein resides in the membrane. In Aedes aegypti (Yellowfever mosquito), this protein is Single-pass membrane and coiled-coil domain-containing protein 4 homolog.